Reading from the N-terminus, the 109-residue chain is Acylphosphatase (109 aa).

One can recognise an Acylphosphatase-like domain in the interval Arg-22–Tyr-109. Residues Arg-37 and Asn-55 contribute to the active site.

Belongs to the acylphosphatase family.

It catalyses the reaction an acyl phosphate + H2O = a carboxylate + phosphate + H(+). In Arthrobacter sp. (strain FB24), this protein is Acylphosphatase (acyP).